The chain runs to 60 residues: Bacteriochlorophyll c-binding protein (60 aa).

At Met-1 the chain carries N-formylmethionine. Residue His-25 participates in a bacteriochlorophyll c binding.

It belongs to the BChl C/E-binding protein family.

It localises to the chlorosome. The protein localises to the chlorosome envelope. Functionally, component of the photosynthetic apparatus. The light harvesting B740 complex binds bacteriochlorophyll c. The chain is Bacteriochlorophyll c-binding protein (csmA) from Pelodictyon luteolum.